Here is a 416-residue protein sequence, read N- to C-terminus: Keratin, type I cuticular Ha1 (416 aa).

Residues Pro2 to Glu56 form a head region. Positions Glu56–Leu367 constitute an IF rod domain. The tract at residues Lys57–Arg91 is coil 1A. Residues Asn92–Ala102 form a linker 1 region. The tract at residues Tyr103 to Cys203 is coil 1B. The linker 12 stretch occupies residues Gln204–Val219. A coil 2 region spans residues Asp220–Glu363. Positions Asp364–Arg416 are tail.

The protein belongs to the intermediate filament family.

This chain is Keratin, type I cuticular Ha1 (Krt31), found in Mus musculus (Mouse).